The following is a 375-amino-acid chain: Alcohol dehydrogenase 1B (375 aa).

An N-acetylserine modification is found at serine 1. Zn(2+) contacts are provided by cysteine 46, histidine 67, cysteine 97, cysteine 100, cysteine 103, cysteine 111, and cysteine 174. NAD(+) is bound by residues 199–204, aspartate 223, lysine 228, 293–295, and arginine 370; these read GLGGVG and VGV.

It belongs to the zinc-containing alcohol dehydrogenase family. Class-I subfamily. As to quaternary structure, multimeric (with different ratios of monomers). Zn(2+) serves as cofactor.

It localises to the cytoplasm. It catalyses the reaction a primary alcohol + NAD(+) = an aldehyde + NADH + H(+). It carries out the reaction a secondary alcohol + NAD(+) = a ketone + NADH + H(+). The polypeptide is Alcohol dehydrogenase 1B (Saara hardwickii (Indian spiny-tailed lizard)).